Reading from the N-terminus, the 198-residue chain is Endonuclease V (198 aa).

Residues aspartate 38 and aspartate 101 each contribute to the Mg(2+) site.

Belongs to the endonuclease V family. The cofactor is Mg(2+).

It localises to the cytoplasm. The enzyme catalyses Endonucleolytic cleavage at apurinic or apyrimidinic sites to products with a 5'-phosphate.. Functionally, DNA repair enzyme involved in the repair of deaminated bases. Selectively cleaves double-stranded DNA at the second phosphodiester bond 3' to a deoxyinosine leaving behind the intact lesion on the nicked DNA. This Saccharolobus islandicus (strain M.16.4 / Kamchatka #3) (Sulfolobus islandicus) protein is Endonuclease V.